Here is a 259-residue protein sequence, read N- to C-terminus: NAD kinase (259 aa).

The Proton acceptor role is filled by Asp-43. Residues 43–44, 111–112, and Arg-136 each bind NAD(+); these read DG and NE.

The protein belongs to the NAD kinase family. A divalent metal cation is required as a cofactor.

The protein localises to the cytoplasm. It carries out the reaction NAD(+) + ATP = ADP + NADP(+) + H(+). In terms of biological role, involved in the regulation of the intracellular balance of NAD and NADP, and is a key enzyme in the biosynthesis of NADP. Catalyzes specifically the phosphorylation on 2'-hydroxyl of the adenosine moiety of NAD to yield NADP. This Mycoplasma genitalium (strain ATCC 33530 / DSM 19775 / NCTC 10195 / G37) (Mycoplasmoides genitalium) protein is NAD kinase.